Reading from the N-terminus, the 185-residue chain is Probable RNA polymerase sigma-C factor (185 aa).

Positions 52-65 (DLTQETFLRAIGAI) match the Polymerase core binding motif. Residues 149 to 168 (YADAAAVCGCPVGTIRSRVA) constitute a DNA-binding region (H-T-H motif).

The protein belongs to the sigma-70 factor family. ECF subfamily.

Sigma factors are initiation factors that promote the attachment of RNA polymerase to specific initiation sites and are then released. This Mycobacterium bovis (strain ATCC BAA-935 / AF2122/97) protein is Probable RNA polymerase sigma-C factor (sigC).